The sequence spans 125 residues: Fluoride-specific ion channel FluC (125 aa).

2 consecutive transmembrane segments (helical) span residues 4-24 and 34-54; these read LWVA…GVWI and YGTF…LTVL. G74 and T77 together coordinate Na(+). Residues 99–119 form a helical membrane-spanning segment; the sequence is VLYFGSSLALGILAVWLGMVV.

It belongs to the fluoride channel Fluc/FEX (TC 1.A.43) family.

The protein localises to the cell inner membrane. The enzyme catalyses fluoride(in) = fluoride(out). Its activity is regulated as follows. Na(+) is not transported, but it plays an essential structural role and its presence is essential for fluoride channel function. Functionally, fluoride-specific ion channel. Important for reducing fluoride concentration in the cell, thus reducing its toxicity. The chain is Fluoride-specific ion channel FluC from Acidobacterium capsulatum (strain ATCC 51196 / DSM 11244 / BCRC 80197 / JCM 7670 / NBRC 15755 / NCIMB 13165 / 161).